The chain runs to 442 residues: Probable protein phosphatase 2C 15 (442 aa).

In terms of domain architecture, PPM-type phosphatase spans 35–303 (AAERPELQVG…DDTTCIVVDI (269 aa)). Mn(2+) contacts are provided by D80, G81, D255, and D294. Residues 420–434 (KKEAMEGKRRSRDSS) are compositionally biased toward basic and acidic residues. The disordered stretch occupies residues 420 to 442 (KKEAMEGKRRSRDSSSRNSGSSE).

Belongs to the PP2C family. It depends on Mg(2+) as a cofactor. Requires Mn(2+) as cofactor.

It catalyses the reaction O-phospho-L-seryl-[protein] + H2O = L-seryl-[protein] + phosphate. It carries out the reaction O-phospho-L-threonyl-[protein] + H2O = L-threonyl-[protein] + phosphate. The polypeptide is Probable protein phosphatase 2C 15 (Oryza sativa subsp. japonica (Rice)).